A 116-amino-acid polypeptide reads, in one-letter code: MQNIPPQVQAMLGQLEGYQQQLQLVIQQKQKVQLELTEAKKALEEIEKVEEGTVIYKTVGTLIVKTDKAKALEELKEKVETLEVRLNALERQEKKLNEKLKELTQKIQTALRPTAG.

The protein belongs to the prefoldin subunit beta family. In terms of assembly, heterohexamer of two alpha and four beta subunits.

It localises to the cytoplasm. In terms of biological role, molecular chaperone capable of stabilizing a range of proteins. Seems to fulfill an ATP-independent, HSP70-like function in archaeal de novo protein folding. The sequence is that of Prefoldin subunit beta from Thermococcus onnurineus (strain NA1).